The primary structure comprises 149 residues: Calmodulin (149 aa).

A2 is modified (N-acetylalanine). 4 consecutive EF-hand domains span residues 8-43, 44-79, 81-116, and 117-149; these read EQIAEFKEAFSLFDKDGDGTITTKELGTVMRSLGQN, PTEAELLVMINEVDADGNGTIDFPEFLTMMARKMKD, DSEEEIKEAFKVFDKDGNGYISAAELRHVMTNLGEK, and LSEDEVEEMIREADVDGDGQINYEEFVKMMMSK. Ca(2+)-binding residues include D21, D23, D25, T27, E32, D57, D59, N61, T63, E68, D94, D96, N98, Y100, E105, D130, D132, D134, Q136, and E141.

The protein belongs to the calmodulin family.

Its function is as follows. Calmodulin mediates the control of a large number of enzymes, ion channels and other proteins by Ca(2+). Among the enzymes to be stimulated by the calmodulin-Ca(2+) complex are a number of protein kinases and phosphatases. The protein is Calmodulin (CMD1) of Blastocladiella emersonii (Aquatic fungus).